Reading from the N-terminus, the 221-residue chain is Phosphoribosylformylglycinamidine synthase subunit PurQ (221 aa).

One can recognise a Glutamine amidotransferase type-1 domain in the interval 2–221 (NVGVIVFPGS…FAGLLEPVAA (220 aa)). C86 (nucleophile) is an active-site residue. Residues H194 and E196 contribute to the active site.

Part of the FGAM synthase complex composed of 1 PurL, 1 PurQ and 2 PurS subunits.

The protein localises to the cytoplasm. The enzyme catalyses N(2)-formyl-N(1)-(5-phospho-beta-D-ribosyl)glycinamide + L-glutamine + ATP + H2O = 2-formamido-N(1)-(5-O-phospho-beta-D-ribosyl)acetamidine + L-glutamate + ADP + phosphate + H(+). It catalyses the reaction L-glutamine + H2O = L-glutamate + NH4(+). It functions in the pathway purine metabolism; IMP biosynthesis via de novo pathway; 5-amino-1-(5-phospho-D-ribosyl)imidazole from N(2)-formyl-N(1)-(5-phospho-D-ribosyl)glycinamide: step 1/2. Part of the phosphoribosylformylglycinamidine synthase complex involved in the purines biosynthetic pathway. Catalyzes the ATP-dependent conversion of formylglycinamide ribonucleotide (FGAR) and glutamine to yield formylglycinamidine ribonucleotide (FGAM) and glutamate. The FGAM synthase complex is composed of three subunits. PurQ produces an ammonia molecule by converting glutamine to glutamate. PurL transfers the ammonia molecule to FGAR to form FGAM in an ATP-dependent manner. PurS interacts with PurQ and PurL and is thought to assist in the transfer of the ammonia molecule from PurQ to PurL. In Synechococcus sp. (strain ATCC 27144 / PCC 6301 / SAUG 1402/1) (Anacystis nidulans), this protein is Phosphoribosylformylglycinamidine synthase subunit PurQ.